We begin with the raw amino-acid sequence, 285 residues long: Vacuolar protein sorting-associated protein 37B (285 aa).

The segment at 50–170 (ASNRSLAEGN…ELVLKGQRHP (121 aa)) is interaction with IST1. One can recognise a VPS37 C-terminal domain in the interval 84-173 (FEAYQIKKTK…LKGQRHPQAG (90 aa)). Disordered stretches follow at residues 167 to 215 (QRHP…PPVP) and 242 to 285 (PLPP…FILQ). 2 stretches are compositionally biased toward pro residues: residues 173 to 184 (GAPPPPRVPEPS) and 206 to 215 (RIPPPPPPVP). The span at 250–259 (PSQQGFSAQL) shows a compositional bias: polar residues. The segment covering 262–275 (PYPPALPQRPPPRM) has biased composition (pro residues). The span at 276-285 (APHQPGFILQ) shows a compositional bias: low complexity.

The protein belongs to the VPS37 family. As to quaternary structure, component of the ESCRT-I complex (endosomal sorting complex required for transport I) which consists of TSG101, VPS28, a VPS37 protein (VPS37A to -D) and MVB12A or MVB12B in a 1:1:1:1 stoichiometry. Interacts with TSG101, VPS28, MVB12A and MVB12B. Component of the ESCRT-I complex (endosomal sorting complex required for transport I) which consists of TSG101, VPS28, a VPS37 protein (VPS37A to -D) and UBAP1 in a 1:1:1:1 stoichiometry. Interacts with CEP55. Interacts with IST1.

The protein resides in the late endosome membrane. Its function is as follows. Component of the ESCRT-I complex, a regulator of vesicular trafficking process. Required for the sorting of endocytic ubiquitinated cargos into multivesicular bodies. May be involved in cell growth and differentiation. The polypeptide is Vacuolar protein sorting-associated protein 37B (Vps37b) (Mus musculus (Mouse)).